The primary structure comprises 273 residues: MSILEKITSSPSECAEHITNKDSCLSKKIQKELTSFLQKKETLGCDSESCVITHPAVKAYAQQKGLDLSKELETRFKAPGPRNNTGLLTNFNIDETLQRWAIKYTKFFNCPFSMMDFESIHYKFNQVDMAKVYKGEELQYVEGKAVKRPCNTFGCVLNTDFSTGPGKHWVAIFVDMRGDCWSIEYFNSAGNSPPGPVIRWMERVKQQLLKIHHTVKTLAVTNIRHQRSQTECGPYSLFYIRARLDNVSYTHFISTRITDENMYKFRTHLFRIA.

Residues histidine 168 and asparagine 187 contribute to the active site. Glutamine 226 serves as a coordination point for substrate. Cysteine 232 acts as the Nucleophile in catalysis.

Belongs to the peptidase C63 family.

The protein localises to the host cytoplasm. The protein resides in the virion. Its function is as follows. Cysteine protease that plays several role during infection including processing of the structural polyprotein or inhibition of the host immune response. Catalyzes the maturation of the pp220 and pp62 polyprotein precursors into core-shell proteins. Plays a role in the disruption of host pyroptosis via specific cleavage of gasdermin D/GSDMD. In addition, strongly decreases the host cGAS-STING signaling by targeting IKBKE via its enzymatic activity. Also impairs host FOXJ1-mediated antiviral effect via degradation of FOXJ1. The chain is Cysteine protease S273R from African swine fever virus (isolate Tick/Malawi/Lil 20-1/1983) (ASFV).